Consider the following 416-residue polypeptide: Serine hydroxymethyltransferase (416 aa).

(6S)-5,6,7,8-tetrahydrofolate-binding positions include Leu-121 and 125 to 127; that span reads GHL. Residue Lys-230 is modified to N6-(pyridoxal phosphate)lysine. 355–357 lines the (6S)-5,6,7,8-tetrahydrofolate pocket; the sequence is SPF.

Belongs to the SHMT family. As to quaternary structure, homodimer. It depends on pyridoxal 5'-phosphate as a cofactor.

It is found in the cytoplasm. The enzyme catalyses (6R)-5,10-methylene-5,6,7,8-tetrahydrofolate + glycine + H2O = (6S)-5,6,7,8-tetrahydrofolate + L-serine. It participates in one-carbon metabolism; tetrahydrofolate interconversion. The protein operates within amino-acid biosynthesis; glycine biosynthesis; glycine from L-serine: step 1/1. In terms of biological role, catalyzes the reversible interconversion of serine and glycine with tetrahydrofolate (THF) serving as the one-carbon carrier. This reaction serves as the major source of one-carbon groups required for the biosynthesis of purines, thymidylate, methionine, and other important biomolecules. Also exhibits THF-independent aldolase activity toward beta-hydroxyamino acids, producing glycine and aldehydes, via a retro-aldol mechanism. This is Serine hydroxymethyltransferase from Streptococcus thermophilus (strain CNRZ 1066).